Consider the following 206-residue polypeptide: MARYIGPKCKLSRREGTDLFLKGRGRSLDTKCKLDKAPGQHGDRRARLSDYGLQLREKQKLRRIYGVLERQFRNYYKTASRMKGSTGENLLQLLERRLDNVVYRMGFGATRAEARQLVSHKAIQVNGQAVNIASYQVQPSDVVAVREKAKKQVRIQDSLTLAEQFGFPEWVEVDTKKMEGVFKSIPERSELPAEINESLVVELYSK.

Positions 96–157 constitute an S4 RNA-binding domain; the sequence is RRLDNVVYRM…KAKKQVRIQD (62 aa).

The protein belongs to the universal ribosomal protein uS4 family. In terms of assembly, part of the 30S ribosomal subunit. Contacts protein S5. The interaction surface between S4 and S5 is involved in control of translational fidelity.

One of the primary rRNA binding proteins, it binds directly to 16S rRNA where it nucleates assembly of the body of the 30S subunit. In terms of biological role, with S5 and S12 plays an important role in translational accuracy. The chain is Small ribosomal subunit protein uS4 from Thioalkalivibrio sulfidiphilus (strain HL-EbGR7).